The following is a 454-amino-acid chain: SH2 domain-containing protein 4A (454 aa).

4 disordered regions span residues 45–65 (AMER…NGKS), 107–131 (EQEA…KSQY), 152–177 (KEEL…SSSS), and 237–302 (RKSK…AYPQ). Over residues 107–120 (EQEAEEPRKTHSEE) the composition is skewed to basic and acidic residues. 2 positions are modified to phosphoserine: Ser118 and Ser124. Over residues 240–259 (KAADEKRRSLAKQAREDYKR) the composition is skewed to basic and acidic residues. Residues Ser261 and Ser315 each carry the phosphoserine modification. In terms of domain architecture, SH2 spans 347–440 (WFHGILTLKK…LGKELLLYPC (94 aa)).

Interacts with ESR1. As to expression, ubiquitously expressed. Aberrantly expressed in some cancers.

It is found in the cytoplasm. In terms of biological role, inhibits estrogen-induced cell proliferation by competing with PLCG for binding to ESR1, blocking the effect of estrogen on PLCG and repressing estrogen-induced proliferation. May play a role in T-cell development and function. The protein is SH2 domain-containing protein 4A (SH2D4A) of Homo sapiens (Human).